A 1365-amino-acid polypeptide reads, in one-letter code: Homeotic protein spalt-major (1365 aa).

3 disordered regions span residues S47–L194, Q270–E298, and L322–K363. 2 stretches are compositionally biased toward low complexity: residues S63–R76 and E87–S99. Positions H103–I117 are enriched in basic and acidic residues. Positions P146–E157 are enriched in low complexity. Positions A159 to E181 are enriched in basic and acidic residues. Acidic residues predominate over residues E275–E298. Residues H346–K363 show a composition bias toward basic and acidic residues. 2 consecutive C2H2-type zinc fingers follow at residues H451 to H473 and F479 to H501. 2 disordered regions span residues V508–P554 and E586–Q716. Residues M530–H539 show a composition bias toward polar residues. Positions S540 to P554 are enriched in pro residues. 2 stretches are compositionally biased toward basic and acidic residues: residues P603 to E622 and V638 to R662. Phosphoserine occurs at positions 739 and 744. The tract at residues P740–S772 is disordered. C2H2-type zinc fingers lie at residues N824–H846, F852–H874, and H884–H906. 3 disordered regions span residues A948 to D1012, V1030 to S1129, and H1146 to P1241. The segment covering D976 to V991 has biased composition (acidic residues). A compositionally biased stretch (low complexity) spans S1040 to A1054. Residues P1055–S1079 show a composition bias toward polar residues. Phosphoserine occurs at positions 1076 and 1079. 3 stretches are compositionally biased toward low complexity: residues L1085–P1100, R1114–S1123, and H1146–A1168. Basic and acidic residues predominate over residues Q1181 to A1191. Positions E1192–A1218 are enriched in low complexity. 2 consecutive C2H2-type zinc fingers follow at residues T1289–H1311 and F1317–H1339.

The protein belongs to the sal C2H2-type zinc-finger protein family.

Its subcellular location is the nucleus. Its function is as follows. Required for the establishment of the posterior-most head and the anterior-most tail segments of the embryo. Probably function as a transcriptional regulator. Could repress the transcription of the tsh gene. In Drosophila melanogaster (Fruit fly), this protein is Homeotic protein spalt-major (salm).